The following is a 53-amino-acid chain: Large ribosomal subunit protein bL33 (53 aa).

This sequence belongs to the bacterial ribosomal protein bL33 family.

In Blochmanniella floridana, this protein is Large ribosomal subunit protein bL33.